The sequence spans 363 residues: Peptide chain release factor 1 (363 aa).

Position 237 is an N5-methylglutamine (Gln-237).

This sequence belongs to the prokaryotic/mitochondrial release factor family. In terms of processing, methylated by PrmC. Methylation increases the termination efficiency of RF1.

It localises to the cytoplasm. Its function is as follows. Peptide chain release factor 1 directs the termination of translation in response to the peptide chain termination codons UAG and UAA. The sequence is that of Peptide chain release factor 1 from Mesoplasma florum (strain ATCC 33453 / NBRC 100688 / NCTC 11704 / L1) (Acholeplasma florum).